The primary structure comprises 139 residues: Hydrogenase maturation factor HypA (139 aa).

His-2 lines the Ni(2+) pocket. Zn(2+) is bound by residues Cys-73, Cys-76, Cys-110, and Cys-113.

The protein belongs to the HypA/HybF family.

Functionally, involved in the maturation of [NiFe] hydrogenases. Required for nickel insertion into the metal center of the hydrogenase. In Pyrococcus furiosus (strain ATCC 43587 / DSM 3638 / JCM 8422 / Vc1), this protein is Hydrogenase maturation factor HypA.